A 607-amino-acid polypeptide reads, in one-letter code: Rap1 GTPase-GDP dissociation stimulator 1 (607 aa).

Positions 4 to 13 (LSDTLKKLKI) match the Nuclear export signal (NES) motif. ARM repeat units follow at residues 89–131 (GLIS…DQAG) and 170–211 (DSLQ…NLAE). Positions 122 to 170 (EGRSAVDQAGGAQIVIDHLRSLCSITDPANEKLLTVFCGMLMNYSNEND) are prevents binding to prenylated RHOA. K230 is modified (N6-acetyllysine). The interacts with polybasic regions in GTPases stretch occupies residues 239-255 (DKREMIFEVLAPLAEND). ARM repeat units lie at residues 347-390 (DANC…NLAI), 391-431 (PVIN…MLID), and 479-519 (SKDV…LIAA). Residues 379-428 (HAALSALRNLAIPVINKAKMLSAGVTEAVLKFLKSEMPPVQFKLLGTLRM) are critical for catalytic activity.

Interacts with RABL3. Interacts with RHOT1. In terms of assembly, interacts with unprenylated RHOA; the interaction is direct. Interacts with RAP1A. Interacts with KRAS. Interacts with RAC1. Interacts with RAP1B. Preferentially interacts with unprenylated GTPases that will become geranylgeranylated. May also interact with prenylated GTPases. As to quaternary structure, interacts with prenylated RHOA; the interaction is direct and in a 1:1 stoichiometry. Interacts with RAP1A. Interacts with KRAS. Interacts with RAC1. Interacts with RAP1B. Preferentially interacts with prenylated GTPases. In terms of processing, forms covalent cross-links mediated by transglutaminase TGM2, between a glutamine and the epsilon-amino group of a lysine residue, forming homopolymers and heteropolymers.

The protein resides in the cytoplasm. It localises to the cytosol. The protein localises to the endoplasmic reticulum. Its subcellular location is the mitochondrion. It is found in the nucleus. Functionally, acts as a GEF (guanine nucleotide exchange factor) for the Rho family of small GTP-binding proteins (G proteins) that stimulates the dissociation of GDP to enable subsequent binding of GTP. Additionally, appears to chaperone the processing and/or trafficking of small GTPases containing a C-terminal polybasic region independently of GEF activity. Targets include RAP1A/RAP1B, RHOA, RHOB, RHOC, RAC1 and KRAS. Regulates mitochondrial dynamics by controlling RHOT function to promote mitochondrial fission during high calcium conditions. Able to promote the Ca(2+) release from the endoplasmic reticulum via both inositol trisphosphate (Ins3P) and ryanodine sensitive receptors leading to a enhanced mitochondrial Ca(2+) uptake. Acts as a GEF (guanine nucleotide exchange factor) for unprenylated RHOA. Chaperones the entry and passage of small GTPases through the prenylation pathway. Recognizes the last amino acid in the GTPase C-terminal CAAX motif with a preference for 'Leu' over 'Met', indicating involvement in the geranylgeranylation pathway. In terms of biological role, acts as a GEF (guanine nucleotide exchange factor) for prenylated RHOA. Acts as a GEF for RHOC. Chaperones the downstream trafficking and/or processing of small newly prenylated GTPases. Escorts RAC1 to the nucleus. In Homo sapiens (Human), this protein is Rap1 GTPase-GDP dissociation stimulator 1.